Consider the following 471-residue polypeptide: Methylenetetrahydrofolate--tRNA-(uracil-5-)-methyltransferase TrmFO (471 aa).

Gly-9–Gly-14 is a binding site for FAD.

This sequence belongs to the MnmG family. TrmFO subfamily. The cofactor is FAD.

It localises to the cytoplasm. The catalysed reaction is uridine(54) in tRNA + (6R)-5,10-methylene-5,6,7,8-tetrahydrofolate + NADH + H(+) = 5-methyluridine(54) in tRNA + (6S)-5,6,7,8-tetrahydrofolate + NAD(+). It catalyses the reaction uridine(54) in tRNA + (6R)-5,10-methylene-5,6,7,8-tetrahydrofolate + NADPH + H(+) = 5-methyluridine(54) in tRNA + (6S)-5,6,7,8-tetrahydrofolate + NADP(+). Catalyzes the folate-dependent formation of 5-methyl-uridine at position 54 (M-5-U54) in all tRNAs. The polypeptide is Methylenetetrahydrofolate--tRNA-(uracil-5-)-methyltransferase TrmFO (Beijerinckia indica subsp. indica (strain ATCC 9039 / DSM 1715 / NCIMB 8712)).